Here is a 452-residue protein sequence, read N- to C-terminus: UPF0210 protein Csac_1314 (452 aa).

The protein belongs to the UPF0210 family. In terms of assembly, homodimer.

This is UPF0210 protein Csac_1314 from Caldicellulosiruptor saccharolyticus (strain ATCC 43494 / DSM 8903 / Tp8T 6331).